Reading from the N-terminus, the 424-residue chain is GTPase Obg (424 aa).

The region spanning 1-158 (MFIDTAKIFV…RWIKLELKLL (158 aa)) is the Obg domain. The OBG-type G domain occupies 159-331 (ADVGLIGFPN…LMKEAARLLS (173 aa)). GTP contacts are provided by residues 165-172 (GFPNVGKS), 190-194 (FTTLK), 212-215 (DIPG), 282-285 (NKSD), and 312-314 (SAA). Mg(2+)-binding residues include serine 172 and threonine 192. The region spanning 345-424 (RFIEEEKRFT…LNDFEFDFLL (80 aa)) is the OCT domain.

Belongs to the TRAFAC class OBG-HflX-like GTPase superfamily. OBG GTPase family. In terms of assembly, monomer. Requires Mg(2+) as cofactor.

The protein resides in the cytoplasm. Functionally, an essential GTPase which binds GTP, GDP and possibly (p)ppGpp with moderate affinity, with high nucleotide exchange rates and a fairly low GTP hydrolysis rate. Plays a role in control of the cell cycle, stress response, ribosome biogenesis and in those bacteria that undergo differentiation, in morphogenesis control. In Clostridium botulinum (strain ATCC 19397 / Type A), this protein is GTPase Obg.